A 213-amino-acid chain; its full sequence is GTP-binding protein YPTC4 (213 aa).

13–21 contributes to the GTP binding site; that stretch reads GDTGVGKSC. The Effector region signature appears at 35-43; that stretch reads HDLTIGVEF. GTP is bound by residues 61-65, 119-122, and 149-151; these read DTAGQ, NKCD, and SAR. The disordered stretch occupies residues 194–213; sequence AGPQTVKPGEGGAAKSSSCC. 2 S-geranylgeranyl cysteine lipidation sites follow: cysteine 212 and cysteine 213.

The protein belongs to the small GTPase superfamily. Rab family.

The protein localises to the cell membrane. Its function is as follows. Protein transport. Probably involved in vesicular traffic. This is GTP-binding protein YPTC4 (YPTC4) from Chlamydomonas reinhardtii (Chlamydomonas smithii).